Consider the following 3726-residue polypeptide: Zinc finger homeobox protein 3 (3726 aa).

2 disordered regions span residues 1-79 (MEGC…SKEV) and 95-129 (MEHHCPGTHPPPALREESASDTSEEGEEESDVENL). The C2H2-type 1 zinc-finger motif lies at 79–103 (VSCNECSASFSSLQTYMEHHCPGTH). Over residues 116–126 (TSEEGEEESDV) the composition is skewed to acidic residues. Residues 282-305 (LMCFLCKLSFGYVRSFVTHAVHDH) form a C2H2-type 2 zinc finger. Residues 417–557 (SVPLGPLASS…GPASTTSNSA (141 aa)) form a disordered region. Position 426 is a phosphoserine (S426). Phosphothreonine is present on T428. Basic and acidic residues predominate over residues 431-459 (SEGKDSGAAEGDKQESGGHQDCFSEKVEP). 2 stretches are compositionally biased toward acidic residues: residues 460-491 (AEEEEAEEEEEEEEEAEEEEEEEEEEEEEEEE) and 500-510 (DLEEELEDSPS). Over residues 528–557 (SNPSISNSPLMPNVLQTLSRGPASTTSNSA) the composition is skewed to polar residues. 2 positions are modified to phosphoserine: S535 and S573. The disordered stretch occupies residues 590–621 (DFADESANKDSATAPEPNESTEGDDGGFVPHH). 3 consecutive C2H2-type zinc fingers follow at residues 641 to 664 (VECPKCDTVLGSSRSLGGHMTMMH), 672 to 695 (LKCPKCNWHYKYQQTLEAHMKEKH), and 727 to 751 (FRCEVCNYSTTTKGNLSIHMQSDKH). The C2H2-type 6; atypical zinc-finger motif lies at 805–829 (WRCEVCDYETNVARNLRIHMTSEKH). The segment at 946–969 (FQCAVCNKFTTDNLDMLGLHMNVE) adopts a C2H2-type 7; degenerate zinc-finger fold. A C2H2-type 8; atypical zinc finger spans residues 985–1009 (YQCKLCRYNTQLKANFQLHCKTDKH). The C2H2-type 9; atypical zinc-finger motif lies at 1041–1065 (LKCNACDYYTNSLEKLRLHTVNSRH). Residues 1089–1113 (YHCVLCNYSTKAKLNLIQHVRSMKH) form a C2H2-type 10; atypical zinc finger. The disordered stretch occupies residues 1125 to 1228 (LQKGLPEEDE…KRPKASEEIK (104 aa)). Residues 1149–1159 (DPEEPVEDAEG) are compositionally biased toward acidic residues. Composition is skewed to polar residues over residues 1175-1191 (GSGSEEGQSKRAASSSQ) and 1199-1217 (SPATTKRTSFPGSSETPLS). S1207 bears the Phosphoserine mark. The C2H2-type 11; atypical zinc finger occupies 1233 to 1256 (YQCPYCKYSNADVNRLRVHAMTQH). The C2H2-type 12 zinc-finger motif lies at 1262–1285 (LRCPLCQDMLNNKIHLQLHLTHLH). The disordered stretch occupies residues 1320–1361 (DGNSTLEEVGKQPEASEDPGKNILPPASMEHGGDLKPTSADP). 3 consecutive C2H2-type zinc fingers follow at residues 1370–1395 (FLCWKKGCNQVFKTSATLQTHFNEVH), 1411–1433 (YRCNQCSLAFKTIEKLQLHSQYH), and 1439–1462 (TMCCLCQRSFRTFQALKKHLETSH). Positions 1500 to 1539 (EEDKEEESDLEDKQSPTGSDSGSVQEDSGSEPKRALPFRK) are disordered. The segment covering 1514-1526 (SPTGSDSGSVQED) has biased composition (polar residues). The segment at 1555–1579 (YKCTVCKESFTQKNILLVHYNSVSH) adopts a C2H2-type 16 zinc-finger fold. S1600 is modified (phosphoserine). Residues 1606 to 1630 (FKCNTCNVAYSQSSTLEIHMRSVLH) form a C2H2-type 17 zinc finger. Disordered regions lie at residues 1639–1678 (LEAASGNSNGTGNSGGVSLSSSTPSPVGSSGANNTFTATN), 1706–1738 (NPISANIASPSEPKEANRKKLADMIASRQQQQQ), and 1866–1943 (LSQS…PRIA). A compositionally biased stretch (low complexity) spans 1643 to 1669 (SGNSNGTGNSGGVSLSSSTPSPVGSSG). The segment covering 1717–1727 (EPKEANRKKLA) has biased composition (basic and acidic residues). Low complexity predominate over residues 1866 to 1878 (LSQSHSALLQPSQ). The span at 1879–1902 (HPEKKNKVVIKEKDKESQREREGP) shows a compositional bias: basic and acidic residues. The C2H2-type 18 zinc finger occupies 1990-2013 (LECDSCGKLFSNILILKSHQEHVH). 2 disordered regions span residues 2037-2089 (YPLR…AQPS) and 2211-2249 (NKDSPYNFSNPPITSLEELKIDSRPPSPEPQKQEYWGSK). Positions 2041-2066 (PQTPEPPPPPPPPPPPPLPTAPPQPA) are enriched in pro residues. Residues 2152–2211 (NKRPRTRITDDQLRVLRQYFDINNSPSEEQIKEMADKSGLPQKVIKHWFRNTLFKERQRN) constitute a DNA-binding region (homeobox 1). Residues 2214-2223 (SPYNFSNPPI) show a composition bias toward polar residues. Positions 2249-2308 (KRSSRTRFTDYQLRVLQDFFDANAYPKDDEFEQLSNLLNLPTRVIVVWFQNARQKARKNY) form a DNA-binding region, homeobox 2. The C2H2-type 19; atypical zinc-finger motif lies at 2335–2358 (YQCKKCSLVFQRIFDLIKHQKKLC). K2356 participates in a covalent cross-link: Glycyl lysine isopeptide (Lys-Gly) (interchain with G-Cter in SUMO1). 2 disordered regions span residues 2383–2405 (TPTSSSCSTPMPSQAYSTPAPSA) and 2429–2529 (NSKA…PQQL). The segment covering 2458-2478 (QPKPEMQQQLEQLEQKTNAPQ) has biased composition (low complexity). A compositionally biased stretch (pro residues) spans 2479-2507 (PKLPQPAAPSLPQPPPQAPPPQCPLPQSS). A compositionally biased stretch (low complexity) spans 2508 to 2521 (PSPSQLSHLPLKPL). The C2H2-type 20 zinc finger occupies 2539–2561 (YQCDQCKLAFPSFEHWQEHQQLH). The Nuclear localization signal motif lies at 2624 to 2626 (KRK). A disordered region spans residues 2628 to 2656 (EEKASASPGENDSGTGGEEPQRDKRLRTT). S2634 carries the phosphoserine modification. A DNA-binding region (homeobox 3) is located at residues 2650 to 2709 (DKRLRTTITPEQLEILYQKYLLDSNPTRKMLDHIAHEVGLKKRVVQVWFQNTRARERKGQ). A C2H2-type 21 zinc finger spans residues 2720–2743 (RRCPFCRALFKAKTALEAHIRSRH). Residues 2780 to 2789 (SHLPPSSSDG) show a composition bias toward polar residues. Residues 2780-2805 (SHLPPSSSDGQGVPLSPVSKTMELSP) form a disordered region. A phosphoserine mark is found at S2795 and S2804. A Glycyl lysine isopeptide (Lys-Gly) (interchain with G-Cter in SUMO1); alternate cross-link involves residue K2815. A Glycyl lysine isopeptide (Lys-Gly) (interchain with G-Cter in SUMO2); alternate cross-link involves residue K2815. The tract at residues 2850–2877 (AITDTTTGDEGNADNDSATGIATETKSS) is disordered. Residues S2900 and S2904 each carry the phosphoserine modification. A disordered region spans residues 2920–2955 (VDYSETSSLADPCSPSPGASGSAGKSGDGGDRPGQK). The segment covering 2929-2944 (ADPCSPSPGASGSAGK) has biased composition (low complexity). Positions 2952 to 3011 (PGQKRFRTQMTNLQLKVLKSCFNDYRTPTMLECEVLGNDIGLPKRVVQVWFQNARAKEKK) form a DNA-binding region, homeobox 4. The segment at 3032–3056 (TECTLCGIKYSARLSVRDHIFSQQH) adopts a C2H2-type 22 zinc-finger fold. Disordered stretches follow at residues 3145–3274 (FTPA…AGTG) and 3415–3476 (QQQQ…SASA). Positions 3147 to 3156 (PANTALTSPK) are enriched in polar residues. The segment covering 3181–3199 (PSSASLSSPTPAQATMAMA) has biased composition (low complexity). A compositionally biased stretch (pro residues) spans 3200 to 3221 (PQPPPQPQQPQPPVQQPPPPPA). The span at 3222 to 3234 (AQQIPAPQLTPQQ) shows a compositional bias: low complexity. Basic and acidic residues predominate over residues 3235–3267 (QRKDKDGEKGKEKEKAHKGKGEPLPVPKKEKGE). Residue K3262 forms a Glycyl lysine isopeptide (Lys-Gly) (interchain with G-Cter in SUMO1) linkage. S3434 carries the post-translational modification Phosphoserine. Residues 3435-3453 (PDKDPAKESPKPEEQKNVP) are compositionally biased toward basic and acidic residues. At S3457 the chain carries Phosphoserine. The C2H2-type 23 zinc finger occupies 3552 to 3576 (YHCLACESALCGEEALSQHLESALH). A disordered region spans residues 3588–3726 (AKEHPSLLPH…TSVGTDTFRL (139 aa)). 2 stretches are compositionally biased toward low complexity: residues 3605-3618 (STASTSQSAAHSND) and 3645-3677 (SRASAAKPPSFPPLSSSSTVTSSSCSTSGVQPS). S3616 carries the phosphoserine modification. S3700 carries the phosphoserine modification. Positions 3715 to 3726 (GLTSVGTDTFRL) are enriched in polar residues.

Interacts with ALKBH4 and PIAS3. Interacts with FNBP3. Interacts with ESR1, RUNX3, TRIM25, SMAD2 and SMAD3. Phosphorylated at Ser-2634 in both embryonic and adult brain. Phosphorylation at Ser-1600, Ser-2795, Ser-2804, Ser-2900, Ser-3434, Ser-3616 and Ser-3700 is restricted to the embryonic brain. Hyperphosphorylation in embryonic brain protects ZFHX3 from calpain/CAPN1-mediated degradation. Post-translationally, ubiquitinated, leading to its proteasomal degradation. In terms of processing, nuclear localization is essential for its sumoylation. In terms of tissue distribution, expressed in suprachiasmatic nucleus (SCN) of the brain (at protein level). Expressed in skeletal muscle. Levels of expression are high in myoblasts but low in differentiated muscle. Expressed in the heart, primarily in the atria.

It is found in the nucleus. Its subcellular location is the cytoplasm. Functionally, transcriptional regulator which can act as an activator or a repressor. Inhibits the enhancer element of the AFP gene by binding to its AT-rich core sequence. In concert with SMAD-dependent TGF-beta signaling can repress the transcription of AFP via its interaction with SMAD2/3. Regulates the circadian locomotor rhythms via transcriptional activation of neuropeptidergic genes which are essential for intercellular synchrony and rhythm amplitude in the suprachiasmatic nucleus (SCN) of the brain. Regulator of myoblasts differentiation through the binding to the AT-rich sequence of MYF6 promoter and promoter repression. Down-regulates the MUC5AC promoter in gastric cancer. In association with RUNX3, up-regulates CDKN1A promoter activity following TGF-beta stimulation. This chain is Zinc finger homeobox protein 3 (Zfhx3), found in Mus musculus (Mouse).